Consider the following 275-residue polypeptide: Diaminopimelate epimerase (275 aa).

Positions 12, 45, and 65 each coordinate substrate. Residue C74 is the Proton donor of the active site. Substrate contacts are provided by residues 75 to 76 (GN), N158, N191, and 209 to 210 (ER). C218 functions as the Proton acceptor in the catalytic mechanism. 219-220 (GT) serves as a coordination point for substrate.

It belongs to the diaminopimelate epimerase family. In terms of assembly, homodimer.

Its subcellular location is the cytoplasm. It catalyses the reaction (2S,6S)-2,6-diaminopimelate = meso-2,6-diaminopimelate. The protein operates within amino-acid biosynthesis; L-lysine biosynthesis via DAP pathway; DL-2,6-diaminopimelate from LL-2,6-diaminopimelate: step 1/1. Functionally, catalyzes the stereoinversion of LL-2,6-diaminopimelate (L,L-DAP) to meso-diaminopimelate (meso-DAP), a precursor of L-lysine and an essential component of the bacterial peptidoglycan. The protein is Diaminopimelate epimerase of Shewanella sp. (strain MR-4).